Consider the following 570-residue polypeptide: MTEVNVRAAATPEEKPFLNRTRHEPANPQPNRSVLVFLHGWGSDKRQWQSFVPTLLEALGDEREMVFIDLPGFGDNSDFRCDDLEHMLKQLARIIPGNATLIGWSLGGMIATQLASRHPEKIGRLITIATNPLFVKNDAEIAAGKAPWKHAMERETFSDFVNGFADDPEATLKRFIALQSMGDSERRQVTDTLKNLLSFSAHSQQTCWANALSYLDQLDNRTALRNLTQPALHIYGKSDALVPVRAGRALQGLAPSHWVESITAAGHAPHISHPREVATMINSFLRQQAPRLSQRKRRIANSFSSAAQEYDTLARLQKRVVDSLVEFSLGTGGSVGQTLLDLGCGTGYCIERLLQQFPEITQPEGRIHALDIAEGMLDRAQQKFDELGVAEQINWHLGDMESLPFVDESFDGCISSLTVQWSENPLQLFSEMYRALKPGGWFALSTLGPETLFELRSAWRMVDEFAHVNKFLSLESVKSVAEQAGLQMVAYKSETPVLYYHSVVHLMRELKGIGAHTINEGRQNGLMGRATFRRLEEAYDNWLDPDRGLPARYEVYYIYLRKPLDESASA.

The segment at 1–29 (MTEVNVRAAATPEEKPFLNRTRHEPANPQ) is disordered. The carboxylesterase stretch occupies residues 1–279 (MTEVNVRAAA…HISHPREVAT (279 aa)). The segment covering 12-25 (PEEKPFLNRTRHEP) has biased composition (basic and acidic residues). Substrate-binding positions include W41, 105-106 (SL), and 175-179 (FIALQ). Catalysis depends on S105, which acts as the Nucleophile. Catalysis depends on residues D239 and H267. H267 is a substrate binding site. The interval 280-570 (MINSFLRQQA…RKPLDESASA (291 aa)) is malonyl-ACP O-methyltransferase.

The protein in the N-terminal section; belongs to the AB hydrolase superfamily. Carboxylesterase BioH family. It in the C-terminal section; belongs to the methyltransferase superfamily.

The catalysed reaction is a carboxylic ester + H2O = an alcohol + a carboxylate + H(+). The enzyme catalyses malonyl-[ACP] + S-adenosyl-L-methionine = malonyl-[ACP] methyl ester + S-adenosyl-L-homocysteine. The protein operates within cofactor biosynthesis; biotin biosynthesis. In terms of biological role, converts the free carboxyl group of a malonyl-thioester to its methyl ester by transfer of a methyl group from S-adenosyl-L-methionine (SAM). It allows to synthesize pimeloyl-ACP via the fatty acid synthetic pathway. Functionally, the physiological role of BioH is to remove the methyl group introduced by BioC when the pimeloyl moiety is complete. It allows to synthesize pimeloyl-ACP via the fatty acid synthetic pathway through the hydrolysis of the ester bonds of pimeloyl-ACP esters. This Teredinibacter turnerae (strain ATCC 39867 / T7901) protein is Biotin biosynthesis bifunctional protein BioHC (bioC).